We begin with the raw amino-acid sequence, 465 residues long: Kynurenine 3-monooxygenase (465 aa).

The disordered stretch occupies residues 1-26 (MSPGIVSQEVNGRQEPTEAARDERHG). Over residues 15–25 (EPTEAARDERH) the composition is skewed to basic and acidic residues. 2 helical membrane-spanning segments follow: residues 405–427 (LLFRLFPGWIPLYNSVSFSSMPY) and 440–462 (LLKRIFGATFLAAIVTGGAIYAQ).

This sequence belongs to the aromatic-ring hydroxylase family. KMO subfamily. The cofactor is FAD.

It localises to the mitochondrion. Its subcellular location is the membrane. The enzyme catalyses L-kynurenine + NADPH + O2 + H(+) = 3-hydroxy-L-kynurenine + NADP(+) + H2O. Its pathway is cofactor biosynthesis; NAD(+) biosynthesis; quinolinate from L-kynurenine: step 1/3. Functionally, catalyzes the hydroxylation of L-kynurenine (L-Kyn) to form 3-hydroxy-L-kynurenine (L-3OHKyn). Required for synthesis of quinolinic acid. This chain is Kynurenine 3-monooxygenase, found in Drosophila melanogaster (Fruit fly).